Here is a 526-residue protein sequence, read N- to C-terminus: Probable Xaa-Pro aminopeptidase GLRG_02280 (526 aa).

Positions 285, 296, 454, and 495 each coordinate Mn(2+).

The protein belongs to the peptidase M24B family. It depends on Mn(2+) as a cofactor.

The catalysed reaction is Release of any N-terminal amino acid, including proline, that is linked to proline, even from a dipeptide or tripeptide.. Functionally, catalyzes the removal of a penultimate prolyl residue from the N-termini of peptides. The protein is Probable Xaa-Pro aminopeptidase GLRG_02280 of Colletotrichum graminicola (strain M1.001 / M2 / FGSC 10212) (Maize anthracnose fungus).